A 350-amino-acid polypeptide reads, in one-letter code: Solute carrier family 35 member E4 (350 aa).

A run of 8 helical transmembrane segments spans residues 40–60, 79–99, 110–130, 135–155, 218–238, 258–278, 279–299, and 301–321; these read VLGQ…LLAG, PLLL…WGAQ, VLLL…GLST, LAQL…ALLL, VTLL…AALV, VLLS…LLAL, TSAL…LILS, and LLFG…TLSG. The region spanning 125 to 179 is the EamA domain; that stretch reads NVGLSTVPLDLAQLATTTTPLFTLALSALLLGRRHHPLQFAAMGPLCLGAACSLA.

Belongs to the TPT transporter family. SLC35E subfamily.

It localises to the membrane. Functionally, putative transporter. In Rattus norvegicus (Rat), this protein is Solute carrier family 35 member E4 (Slc35e4).